The following is a 287-amino-acid chain: PsbP domain-containing protein 1, chloroplastic (287 aa).

It belongs to the PsbP family. In terms of assembly, partially associated with photosystem I (PSI) complex, but is not a subunit of the complex. Interacts with PsaA and PsaB, but not with PasF.

It localises to the plastid. Its subcellular location is the chloroplast thylakoid lumen. Functionally, photosystem I assembly factor that assists the proper folding and integration of PsaB and PsaA into the thylakoid membrane. The polypeptide is PsbP domain-containing protein 1, chloroplastic (PPD1) (Arabidopsis thaliana (Mouse-ear cress)).